A 185-amino-acid polypeptide reads, in one-letter code: Ribosome-recycling factor (185 aa).

The protein belongs to the RRF family.

The protein resides in the cytoplasm. Its function is as follows. Responsible for the release of ribosomes from messenger RNA at the termination of protein biosynthesis. May increase the efficiency of translation by recycling ribosomes from one round of translation to another. This Pseudomonas fluorescens (strain Pf0-1) protein is Ribosome-recycling factor.